A 692-amino-acid polypeptide reads, in one-letter code: Protein arginine N-methyltransferase 7 (692 aa).

SAM-dependent MTase PRMT-type domains lie at serine 14–tryptophan 345 and serine 358–glutamate 684. Arginine 32 carries the omega-N-methylarginine modification. Active-site residues include glutamate 144 and glutamate 153.

This sequence belongs to the class I-like SAM-binding methyltransferase superfamily. Protein arginine N-methyltransferase family. PRMT7 subfamily. As to quaternary structure, homodimer and heterodimer. Interacts with PRMT5 and SNRPD3. Interacts with CTCFL.

It is found in the cytoplasm. Its subcellular location is the cytosol. The protein localises to the nucleus. The catalysed reaction is L-arginyl-[protein] + S-adenosyl-L-methionine = N(omega)-methyl-L-arginyl-[protein] + S-adenosyl-L-homocysteine + H(+). Arginine methyltransferase that can both catalyze the formation of omega-N monomethylarginine (MMA) and symmetrical dimethylarginine (sDMA), with a preference for the formation of MMA. Specifically mediates the symmetrical dimethylation of arginine residues in the small nuclear ribonucleoproteins Sm D1 (SNRPD1) and Sm D3 (SNRPD3); such methylation being required for the assembly and biogenesis of snRNP core particles. Specifically mediates the symmetric dimethylation of histone H4 'Arg-3' to form H4R3me2s. Plays a role in gene imprinting by being recruited by CTCFL at the H19 imprinted control region (ICR) and methylating histone H4 to form H4R3me2s, possibly leading to recruit DNA methyltransferases at these sites. May also play a role in embryonic stem cell (ESC) pluripotency. Also able to mediate the arginine methylation of histone H2A and myelin basic protein (MBP) in vitro; the relevance of such results is however unclear in vivo. This is Protein arginine N-methyltransferase 7 (Prmt7) from Mus musculus (Mouse).